Reading from the N-terminus, the 482-residue chain is UDP-N-acetylmuramate--L-alanine ligase (482 aa).

111-117 (GTHGKTT) serves as a coordination point for ATP.

It belongs to the MurCDEF family.

Its subcellular location is the cytoplasm. It carries out the reaction UDP-N-acetyl-alpha-D-muramate + L-alanine + ATP = UDP-N-acetyl-alpha-D-muramoyl-L-alanine + ADP + phosphate + H(+). The protein operates within cell wall biogenesis; peptidoglycan biosynthesis. Functionally, cell wall formation. The polypeptide is UDP-N-acetylmuramate--L-alanine ligase (Symbiobacterium thermophilum (strain DSM 24528 / JCM 14929 / IAM 14863 / T)).